The following is a 347-amino-acid chain: Putative GDP-L-fucose synthase 2 (347 aa).

The disordered stretch occupies residues 1–20; the sequence is MPSQQRSSSGSTAKAGDADG. 41 to 47 provides a ligand contact to NADP(+); that stretch reads GHRGMVG. Tyr168 serves as the catalytic Proton donor/acceptor. Residues Lys172, 195–198, and His211 contribute to the NADP(+) site; that span reads PNNL. Residues Arg219, Trp234, Arg241, and Glu301 each contribute to the substrate site.

It belongs to the NAD(P)-dependent epimerase/dehydratase family. Fucose synthase subfamily. Homodimer.

The catalysed reaction is GDP-beta-L-fucose + NADP(+) = GDP-4-dehydro-alpha-D-rhamnose + NADPH + H(+). The protein operates within nucleotide-sugar biosynthesis; GDP-L-fucose biosynthesis via de novo pathway; GDP-L-fucose from GDP-alpha-D-mannose: step 2/2. Functionally, catalyzes the two-step NADP-dependent conversion of GDP-4-dehydro-6-deoxy-D-mannose to GDP-fucose, involving an epimerase and a reductase reaction. The protein is Putative GDP-L-fucose synthase 2 of Oryza sativa subsp. japonica (Rice).